A 185-amino-acid polypeptide reads, in one-letter code: Sarcoplasmic calcium-binding proteins II, V, VI, and VII (185 aa).

EF-hand domains follow at residues 5-41 (FQKQ…YKEV), 57-92 (SLED…TIAT), 102-137 (WCQN…FQLQ), and 138-173 (CADV…TSPA). Ca(2+) contacts are provided by aspartate 19, asparagine 21, aspartate 23, serine 25, aspartate 30, aspartate 70, asparagine 72, aspartate 74, glutamate 81, aspartate 115, serine 117, aspartate 119, and glutamate 126.

Like parvalbumins, SCPs seem to be more abundant in fast contracting muscles, but no functional relationship can be established from this distribution. In Branchiostoma lanceolatum (Common lancelet), this protein is Sarcoplasmic calcium-binding proteins II, V, VI, and VII.